Consider the following 421-residue polypeptide: Imidazolonepropionase (421 aa).

The Fe(3+) site is built by H81 and H83. Residues H81 and H83 each coordinate Zn(2+). Residues R90, Y153, and H186 each coordinate 4-imidazolone-5-propanoate. Residue Y153 coordinates N-formimidoyl-L-glutamate. A Fe(3+)-binding site is contributed by H251. A Zn(2+)-binding site is contributed by H251. Residue E254 coordinates 4-imidazolone-5-propanoate. D326 contacts Fe(3+). Residue D326 participates in Zn(2+) binding. Residues N328 and G330 each coordinate N-formimidoyl-L-glutamate. S331 lines the 4-imidazolone-5-propanoate pocket.

It belongs to the metallo-dependent hydrolases superfamily. HutI family. Zn(2+) serves as cofactor. Requires Fe(3+) as cofactor.

It localises to the cytoplasm. The enzyme catalyses 4-imidazolone-5-propanoate + H2O = N-formimidoyl-L-glutamate. The protein operates within amino-acid degradation; L-histidine degradation into L-glutamate; N-formimidoyl-L-glutamate from L-histidine: step 3/3. In terms of biological role, catalyzes the hydrolytic cleavage of the carbon-nitrogen bond in imidazolone-5-propanoate to yield N-formimidoyl-L-glutamate. It is the third step in the universal histidine degradation pathway. This chain is Imidazolonepropionase, found in Streptococcus pyogenes serotype M18 (strain MGAS8232).